Here is an 86-residue protein sequence, read N- to C-terminus: Weak neurotoxin 10 (86 aa).

Residues 1–21 (MKTLLLTLVVVTIVCLDLGYT) form the signal peptide. Disulfide bonds link Cys24-Cys45, Cys27-Cys32, Cys38-Cys63, Cys67-Cys78, and Cys79-Cys84.

The protein belongs to the three-finger toxin family. Ancestral subfamily. Orphan group II sub-subfamily. Expressed by the venom gland.

Its subcellular location is the secreted. Functionally, binds with low affinity to muscular (alpha-1-beta-1-delta-epsilon/CHRNA1-CHRNB1-CHRND-CHRNE) and very low affinity to neuronal (alpha-7/CHRNA7) nicotinic acetylcholine receptor (nAChR). This Naja sputatrix (Malayan spitting cobra) protein is Weak neurotoxin 10 (WNTX10).